The chain runs to 858 residues: Neurofilament medium polypeptide (858 aa).

At S2 the chain carries N-acetylserine. Residues 2 to 99 (SYTMEPLGNP…KLSRSNEKEQ (98 aa)) form a head region. The disordered stretch occupies residues 22 to 57 (ATYSRASASPSSGFRSQSWSRGSGSTVSSSYKRTNL). Over residues 30 to 54 (SPSSGFRSQSWSRGSGSTVSSSYKR) the composition is skewed to low complexity. T47 carries O-linked (GlcNAc) threonine glycosylation. The IF rod domain maps to 96 to 407 (EKEQLQGLND…KLLEGEETRF (312 aa)). The coil 1A stretch occupies residues 100-131 (LQGLNDRFAGYIEKVHYLEQQNKEIEAELAAL). The interval 132 to 144 (RQKHAGRAQLGDA) is linker 1. A coil 1B region spans residues 145-243 (YEQELRELRG…EEEVAELLAQ (99 aa)). The interval 244 to 260 (LQASHATVERKDYLKTD) is linker 12. The interval 261–282 (LTTALKEIRAQLECQSDHNMHQ) is coil 2A. A linker 2 region spans residues 283–286 (AEEW). Positions 287-407 (FKCRYAKLTE…KLLEGEETRF (121 aa)) are coil 2B. The tract at residues 408 to 858 (SAFSGSITGP…SHAVVKEIKE (451 aa)) is tail. T427 is a glycosylation site (O-linked (GlcNAc) threonine). A disordered region spans residues 478-788 (AAKAQEEEQE…VVTNGLDVSP (311 aa)). Acidic residues-rich tracts occupy residues 484 to 500 (EEQE…EEEA) and 509 to 524 (AAEE…EEEE). Basic and acidic residues predominate over residues 525-541 (AAKSDAAEEGGSKKEEI). The segment covering 542–555 (EEKEEGEEAEEEEA) has biased composition (acidic residues). Residues 556–572 (EAKGKAEEAGAKVEKVK) are compositionally biased toward basic and acidic residues. A compositionally biased stretch (pro residues) spans 576-586 (AKSPPKSPPKS). Residues 590–601 (EQAKAVQKAAAE) are compositionally biased toward low complexity. Residues 602–623 (VGKDQKAEKAAEKAAKEEKAAS) show a composition bias toward basic and acidic residues. Residues 624 to 637 (PEKPATPKVTSPEK) show a composition bias toward low complexity. 2 stretches are compositionally biased toward basic and acidic residues: residues 651–664 (ITPE…KPTT) and 675–727 (ASPE…KAVV). Low complexity predominate over residues 728–743 (EESITVTKVTKVTAEV). Basic and acidic residues predominate over residues 744 to 771 (EVSKEARKEDIAVNGEVEEKKDEAKEKE).

Belongs to the intermediate filament family. There are a number of repeats of the tripeptide K-S-P, NFM is phosphorylated on a number of the serines in this motif. It is thought that phosphorylation of NFM results in the formation of interfilament cross bridges that are important in the maintenance of axonal caliber. Post-translationally, phosphorylation seems to play a major role in the functioning of the larger neurofilament polypeptides (NF-M and NF-H), the levels of phosphorylation being altered developmentally and coincident with a change in the neurofilament function.

The protein resides in the cytoplasm. Its subcellular location is the cytoskeleton. It is found in the cell projection. It localises to the axon. In terms of biological role, neurofilaments usually contain three intermediate filament proteins: NEFL, NEFM, and NEFH which are involved in the maintenance of neuronal caliber. May additionally cooperate with other neuronal intermediate filament proteins to form neuronal filamentous networks. The protein is Neurofilament medium polypeptide (NEFM) of Gallus gallus (Chicken).